The chain runs to 107 residues: MEPYAVIQTGNKQYQVRKGDVIDVELLDGISEENKEVLFQDVLFTFDGEKASVGAPTVGNAVVKGELVSFVRGEKVVAYKYKKRKNYHKKIGHRQNYLRVKISDLVM.

It belongs to the bacterial ribosomal protein bL21 family. In terms of assembly, part of the 50S ribosomal subunit. Contacts protein L20.

In terms of biological role, this protein binds to 23S rRNA in the presence of protein L20. This is Large ribosomal subunit protein bL21 from Chlamydia trachomatis serovar L2 (strain ATCC VR-902B / DSM 19102 / 434/Bu).